The following is a 305-amino-acid chain: Glycine--tRNA ligase alpha subunit (305 aa).

Belongs to the class-II aminoacyl-tRNA synthetase family. Tetramer of two alpha and two beta subunits.

The protein resides in the cytoplasm. It carries out the reaction tRNA(Gly) + glycine + ATP = glycyl-tRNA(Gly) + AMP + diphosphate. The sequence is that of Glycine--tRNA ligase alpha subunit from Streptococcus pneumoniae (strain Hungary19A-6).